Here is a 488-residue protein sequence, read N- to C-terminus: MKPKLMYQELKVPVEEPAGELPMNEIEAWKAAEKKARWVLLVLILAVVGFGALMTQLFLWEYGDLHLFGPNQHPAPCYDPCEAVLVESIPEGLEFPNATTSNPSTSQAWLGLLAGAHSSLDIASFYWTLTNNDTHTQEPSAQQGEEVLQQLQALAPRGVKVRIAVSKPNGPLADLQSLLQSGAQVRMVDMQKLTHGVLHTKFWVVDQTHFYLGSANMDWRSLTQVKELGVVMYNCSCLARDLTKIFEAYWFLGQAGSSIPSTWPRPFDTRYNQETPMEICLNGTPALAYLASAPPPLCPGGRTPDLKALLSVVDNARSFIYIAVMNYLPTMEFSHPRRFWPAIDDGLRRAAYERGVKVRLLISCWGHSEPSMRSFLLSLAALRDNHTHSDIQVKLFVVPADEAQARIPYARVNHNKYMVTERTTYIGTSNWSGSYFTETAGTSLLVTQNGHGGLRSQLEAVFLRDWESPYSHNLDTSADSVGNACRLL.

Topologically, residues 1–38 (MKPKLMYQELKVPVEEPAGELPMNEIEAWKAAEKKARW) are cytoplasmic. The helical; Signal-anchor for type II membrane protein transmembrane segment at 39-59 (VLLVLILAVVGFGALMTQLFL) threads the bilayer. Topologically, residues 60-488 (WEYGDLHLFG…DSVGNACRLL (429 aa)) are lumenal. Disulfide bonds link C77–C237 and C81–C235. 2 N-linked (GlcNAc...) asparagine glycosylation sites follow: N97 and N132. One can recognise a PLD phosphodiesterase 1 domain in the interval 194 to 221 (THGVLHTKFWVVDQTHFYLGSANMDWRS). Active-site residues include H199, K201, and D206. The active-site Proton donor is the H199. Positions 199 and 201 each coordinate phosphate. Phosphate is bound at residue N216. 3 N-linked (GlcNAc...) asparagine glycosylation sites follow: N234, N282, and N385. A disulfide bridge connects residues C364 and C485. In terms of domain architecture, PLD phosphodiesterase 2 spans 409-435 (YARVNHNKYMVTERTTYIGTSNWSGSY). Position 414 (H414) interacts with phosphate. The Nucleophile role is filled by H414. F436 provides a ligand contact to Mg(2+).

This sequence belongs to the phospholipase D family. Homodimer. Interacts with APP. N-glycosylated. In terms of processing, proteolytically processed to a soluble form that is stable within endosomes and lysosomes. During transport through the secretory pathway becomes proteolysed by cysteine proteases, thereby releasing a stable soluble lysosomal lumenal polypeptide, whereas the transmembrane-bound fragment is rapidly degraded. Its transport route to lysosomes involves ubiquitination and the ESCRT complex. Post-translationally, ubiquitinated. Ubiquitination mediates sorting into lysosomes.

The protein localises to the endoplasmic reticulum membrane. It is found in the lysosome lumen. It localises to the early endosome membrane. Its subcellular location is the late endosome membrane. The protein resides in the golgi apparatus membrane. The protein localises to the endosome membrane. It carries out the reaction Exonucleolytic cleavage in the 5'- to 3'-direction to yield nucleoside 3'-phosphates.. The enzyme catalyses a 5'-end 5'-dephospho-ribonucleotidyl-ribonucleotide-RNA + H2O = a ribonucleoside 3'-phosphate + a 5'-end dephospho-ribonucleoside-RNA + H(+). It catalyses the reaction a ribonucleoside 3'-phosphate-2'-3'-cyclophospho-GMP + H2O = a ribonucleoside 3'-phosphate + 2',3'-cyclophospho-GMP + H(+). The catalysed reaction is a 5'-end 5'-dephospho-2'-deoxyribonucleotidyl-2'-deoxyribonucleotide in single-stranded DNA + H2O = a 5'-end dephospho-2'-deoxyribonucleoside in single-stranded DNA + a 2'-deoxyribonucleoside 3'-phosphate + H(+). It carries out the reaction a 5'-end 5'-phospho-2'-deoxyribonucleotide in single-stranded DNA + H2O = a 5'-end 5'-dephospho-2'-deoxyribonucleotide in single-stranded DNA + phosphate. The enzyme catalyses a 3-lyso-sn-glycero-1-phospho-(3'-acyl-1'-sn-glycerol) + a 1-acyl-sn-glycerol = a 3-acyl-sn-glycero-1-phospho-(3'-acyl-1'-sn-glycerol) + glycerol. It catalyses the reaction 3-lyso-sn-glycero-1-phospho-(3'-(9Z-octadecenoyl)-1'-sn-glycerol) + 1-(9Z-octadecenoyl)-sn-glycerol = 3-(9Z-octadecenoyl)-sn-glycero-1-phospho-(3'-(9Z-octadecenoyl)-1'-sn-glycerol) + glycerol. In terms of biological role, 5'-&gt;3' exonuclease that hydrolyzes the phosphodiester bond of single-stranded DNA (ssDNA) and RNA molecules to form nucleoside 3'-monophosphates and 5'-end 5'-hydroxy deoxyribonucleotide/ribonucleotide fragments. Partially redundant with PLD4, can cleave all four nucleotides displaying higher efficiency for ssDNA and RNA fragments initiated with uridine and guanosine residues and lower efficiency for cytidine-initiated substrates. As a result, it does not always degrade polynucleotides to the single nucleotide level, it can stall at specific sites sparing certain fragments from exonucleolytic degradation. Processes self and pathogenic ssDNA and RNA molecules that reach the endolysosomal compartment via phagocytosis or autophagy and may serve as 'danger' signals for recognition by innate immune receptors such as toll-like receptors (TLRs). Degrades mitochondrial CpG-rich ssDNA fragments to prevent TLR9 activation and autoinflammatory response, but it can cleave viral RNA to generate ligands for TLR7 activation and initiate antiviral immune responses. In plasmacytoid dendritic cells, it cooperates with endonuclease RNASET2 to release 2',3'-cyclic guanosine monophosphate (2',3'-cGMP), a potent stimulatory ligand for TLR7. Produces 2',3'-cGMPs and cytidine-rich RNA fragments that occupy TLR7 ligand-binding pockets and trigger a signaling-competent state. Can exert polynucleotide phosphatase activity toward 5'-phosphorylated ssDNA substrates although at a slow rate. Transphosphatidylase that catalyzes the exchange with R to S stereo-inversion of the glycerol moiety between (S,R)-lysophosphatidylglycerol (LPG) and monoacylglycerol (MAG) substrates to yield (S,S)-bis(monoacylglycero)phosphate (BMP). Can synthesize a variety of (S,S)-BMPs representing the main phospholipid constituent of lysosomal intralumenal vesicle (ILV) membranes that bind acid hydrolases for lipid degradation. Regulates the homeostasis and interorganellar communication of the endolysosomal system with an overall impact on cellular removal of dysfunctional organelles via autophagy as well as proper protein and lipid turnover. May play a role in myotube formation in response to ER stress. This chain is 5'-3' exonuclease PLD3 (Pld3), found in Rattus norvegicus (Rat).